Reading from the N-terminus, the 576-residue chain is Boron transporter 1 (576 aa).

The Cytoplasmic segment spans residues 1-84 (MSNESTRVTV…SDWVDAFNYR (84 aa)). Residues 19 to 48 (ECAQALERTNDELDRESSVSESRSDEESHE) form a disordered region. Residues 26-48 (RTNDELDRESSVSESRSDEESHE) show a composition bias toward basic and acidic residues. The helical transmembrane segment at 85–105 (VIPSIVDTYFNNLLPAIAFAQ) threads the bilayer. Residues 106–116 (DMFDRTDNSYG) are Extracellular-facing. Residues 117 to 134 (VNEVLLSSAMAGIVFGVL) traverse the membrane as a helical segment. Residues 135–140 (GGQPLC) lie on the Cytoplasmic side of the membrane. A helical transmembrane segment spans residues 141-160 (IVGVTGPISIFNYTVYEIIK). At 161 to 165 (PLNTS) the chain is on the extracellular side. A helical transmembrane segment spans residues 166 to 186 (YFGFMFWICMWSMIFHLVLAF). Residues 187–192 (TNAVCL) are Cytoplasmic-facing. A helical transmembrane segment spans residues 193–213 (LQYVTTFPCDIFGLFINVVYI). Residues 214-235 (QKGIQILTRQFSAKSGEKSVQD) are Extracellular-facing. A helical transmembrane segment spans residues 236 to 256 (GFASVVVALVMTAFGLFFKLF). Residues 257-274 (HYYPLFSHRIRTFISDYS) are Cytoplasmic-facing. The helical transmembrane segment at 275–295 (TALSVLFWSSFTHFGGYLHDV) threads the bilayer. Topologically, residues 296-329 (KFKKLPITKAFFPTSKVNRPQNTWLAYEPIPVKD) are extracellular. The chain crosses the membrane as a helical span at residues 330-350 (VFIALPFGIFLTILFYFDHNV). Topologically, residues 351–373 (SSLMAQRHQYKLKKPSSFHYDFA) are cytoplasmic. A helical transmembrane segment spans residues 374–394 (LLGLTTCISGVLGIPAPNGLI). The Extracellular portion of the chain corresponds to 395-438 (PQAPLHTETLLVRDSNQKVISCVEQRFTNTFQGLMILGTMTRPL). The helical transmembrane segment at 439 to 459 (LVCLGEIPQAVLSGLFFIMGI) threads the bilayer. Topologically, residues 460 to 495 (NGLMTNSIIQRLVFLFSDPNRRDNTSPLMKVSKKSM) are cytoplasmic. A helical transmembrane segment spans residues 496–516 (LIFLSFSLTGFAGEFAITNTI). The Extracellular segment spans residues 517–518 (AA). Residues 519–539 (IGFPLVLLLSVLVSFSFAYIF) traverse the membrane as a helical segment. The Cytoplasmic segment spans residues 540–576 (PTEELKILDTNVAQKFTIKNLLLENIRDAKFCDKHED).

This sequence belongs to the anion exchanger (TC 2.A.31) family.

The protein localises to the cell membrane. It is found in the vacuole membrane. In terms of biological role, functions in boric acid/borate export across the plasma membrane, and thereby protects yeast cells from boron toxicity. Involved in the trafficking of proteins to the vacuole. In Saccharomyces cerevisiae (strain ATCC 204508 / S288c) (Baker's yeast), this protein is Boron transporter 1 (BOR1).